The sequence spans 172 residues: MMKLKSNQTRTYDGDGYKKRAACLCFRSESEEEVLLVSSSRHPDRWIVPGGGMEPEEEPSVAAVREVCEEAGVKGTLGRLVGIFENQERKHRTYVYVLIVTEVLEDWEDSVNIGRKREWFKIEDAIKVLQYHKPVQASYFETLRQGYSANNGTPVVATTYSVSAQSSMSGIR.

M1 bears the N-acetylmethionine mark. Substrate-binding positions include R10, K18–R20, and S39–R41. The region spanning Y17 to T142 is the Nudix hydrolase domain. G50 and E66 together coordinate Mg(2+). A Nudix box motif is present at residues G51–G72. E69 acts as the Proton acceptor in catalysis. Residue E70 participates in Mg(2+) binding. Substrate contacts are provided by residues R89–H91, R115, and K133.

This sequence belongs to the Nudix hydrolase family. DIPP subfamily. In terms of assembly, monomer. The cofactor is Mg(2+). Mn(2+) is required as a cofactor. It depends on Zn(2+) as a cofactor. Widely expressed. Expressed at higher level in brain, heart, pancreas and liver. Also expressed in placenta, lung and kidney.

The protein resides in the cytoplasm. The protein localises to the nucleus. It catalyses the reaction diphospho-myo-inositol polyphosphate + H2O = myo-inositol polyphosphate + phosphate.. The catalysed reaction is 5-diphospho-1D-myo-inositol 1,2,3,4,6-pentakisphosphate + H2O = 1D-myo-inositol hexakisphosphate + phosphate + H(+). It carries out the reaction 3,5-bis(diphospho)-1D-myo-inositol 1,2,4,6-tetrakisphosphate + H2O = 3-diphospho-1D-myo-inositol 1,2,4,5,6-pentakisphosphate + phosphate + 2 H(+). The enzyme catalyses [phosphate](n+1) + n H2O = (n+1) phosphate + n H(+). It catalyses the reaction P(1),P(5)-bis(5'-adenosyl) pentaphosphate + H2O = ADP + ATP + 2 H(+). The catalysed reaction is P(1),P(6)-bis(5'-adenosyl) hexaphosphate + H2O = 2 ATP + 2 H(+). It carries out the reaction P(1),P(4)-bis(5'-adenosyl) tetraphosphate + H2O = AMP + ATP + 2 H(+). The enzyme catalyses a 5'-end (N(7)-methyl 5'-triphosphoguanosine)-ribonucleoside in mRNA + H2O = N(7)-methyl-GMP + a 5'-end diphospho-ribonucleoside in mRNA + 2 H(+). It catalyses the reaction a 5'-end (N(7)-methyl 5'-triphosphoguanosine)-ribonucleoside in mRNA + H2O = N(7)-methyl-GDP + a 5'-end phospho-ribonucleoside in mRNA + 2 H(+). Its activity is regulated as follows. Endopolyphospahatase activity is inhibited by NaF, NaPPi, beta-glycerol phosphate and heparin. 5-diphosphoinositol pentakisphosphate (5-InsP7) inhibits its mRNA decapping activity. Cleaves a beta-phosphate from the diphosphate groups in PP-InsP5 (diphosphoinositol pentakisphosphate) and [PP]2-InsP4 (bisdiphosphoinositol tetrakisphosphate), suggesting that it may play a role in signal transduction. InsP6 (inositol hexakisphosphate) is not a substrate. Acts as a negative regulator of the ERK1/2 pathway. Also able to catalyze the hydrolysis of dinucleoside oligophosphates, with diadenosine 5',5'''-P1,P6-hexaphosphate (Ap6A) and diadenosine 5',5'''- P1,P5-pentaphosphate (Ap5A) being the preferred substrates. The major reaction products are ADP and p4a from Ap6A and ADP and ATP from Ap5A. Also able to hydrolyze 5-phosphoribose 1-diphosphate. Acts as a decapping enzyme that modulates the stability of a subset of mRNAs implicated in cell motility. Hydrolyzes monomethylated capped RNA after both the alpha- and beta-phosphates generating m7GMP + ppRNA and m7GDP + pRNA. Can hydrolyze unmethylated capped RNAs. Divalent cations zinc, magnesium and manganese determine its substrate specificity. Exhibits diphosphoinositol polyphosphate phosphohydrolase in the presence of magnesium ions, diadenosine hexaphosphate hydrolase activity in the presence of manganese ions and endopolyphosphatase activity in the presence of zinc ions. Plays an important role in limiting DNA damage and maintaining cell survival upon oxidative stress via its endopolyphosphatase activity. The protein is Diphosphoinositol polyphosphate phosphohydrolase 1 of Homo sapiens (Human).